A 274-amino-acid chain; its full sequence is tRNA-cytidine(32) 2-sulfurtransferase (274 aa).

The short motif at 40-45 (SGGKDS) is the PP-loop motif element. 3 residues coordinate [4Fe-4S] cluster: C115, C118, and C206.

This sequence belongs to the TtcA family. As to quaternary structure, homodimer. Requires Mg(2+) as cofactor. It depends on [4Fe-4S] cluster as a cofactor.

It localises to the cytoplasm. It catalyses the reaction cytidine(32) in tRNA + S-sulfanyl-L-cysteinyl-[cysteine desulfurase] + AH2 + ATP = 2-thiocytidine(32) in tRNA + L-cysteinyl-[cysteine desulfurase] + A + AMP + diphosphate + H(+). The protein operates within tRNA modification. Its function is as follows. Catalyzes the ATP-dependent 2-thiolation of cytidine in position 32 of tRNA, to form 2-thiocytidine (s(2)C32). The sulfur atoms are provided by the cysteine/cysteine desulfurase (IscS) system. The polypeptide is tRNA-cytidine(32) 2-sulfurtransferase (Azotobacter vinelandii (strain DJ / ATCC BAA-1303)).